Consider the following 559-residue polypeptide: NXPE family member 3 (559 aa).

The N-terminal stretch at 1–30 is a signal peptide; the sequence is MWINFVKLRLFCCLLAVLMVVVLVVNVTQV. N-linked (GlcNAc...) asparagine glycans are attached at residues asparagine 26, asparagine 237, and asparagine 346.

It belongs to the NXPE family.

It is found in the secreted. This chain is NXPE family member 3 (NXPE3), found in Bos taurus (Bovine).